The primary structure comprises 544 residues: Potential vesicular glutamate transporter vglu-3 (544 aa).

Over 1-49 the chain is Cytoplasmic; it reads MPNGSIRNCANAVADTVRQTFSRKTWEHKEQLQTITEQKKFFLRKVRWQ. A helical transmembrane segment spans residues 50 to 70; sequence IAILAHFGFAISFGIRSNFGV. Topologically, residues 71–104 are extracellular; that stretch reads AKNRMVNNFTDAYGEVHEREFLWTGAEVGMMESS. N-linked (GlcNAc...) asparagine glycosylation is present at Asn78. Residues 105 to 125 form a helical membrane-spanning segment; sequence FFYGYAASQIPAGVLAAKFAP. The Cytoplasmic segment spans residues 126-127; the sequence is NK. Residues 128 to 148 traverse the membrane as a helical segment; the sequence is IFMLGILVASFMNILSAISFN. Residues 149–154 are Extracellular-facing; the sequence is FHPYTD. The chain crosses the membrane as a helical span at residues 155–175; that stretch reads IFVMVVQAVQGLALGVLYPAM. Residues 176 to 193 lie on the Cytoplasmic side of the membrane; that stretch reads HGVWKFWAPPLERSKLAT. A helical transmembrane segment spans residues 194–214; the sequence is TAFTGSSVGVMTGLPASAYLV. The Extracellular segment spans residues 215–219; it reads SHFSW. Residues 220–240 form a helical membrane-spanning segment; that stretch reads STPFYVFGVVGIIWSLIWMYV. The Cytoplasmic portion of the chain corresponds to 241–285; that stretch reads SSHSPETHGYISDDEKKQVTEKIGDVAVKNMSLTTLPWRDMMTSS. Residues 286–306 form a helical membrane-spanning segment; it reads AVWAIIICTFCRSWGFFLLLG. Residues 307–323 lie on the Extracellular side of the membrane; sequence NQLTYMKDVLHIDIKNS. The chain crosses the membrane as a helical span at residues 324–344; sequence GFISIFPQFGMCIVTLATGQL. Over 345-360 the chain is Cytoplasmic; sequence CDYLRSSGKMSTEAVR. The chain crosses the membrane as a helical span at residues 361-381; that stretch reads KSVNTFGFTVEAMMLGCLAFV. Residues 382-384 lie on the Extracellular side of the membrane; it reads RDP. Residues 385–405 traverse the membrane as a helical segment; that stretch reads VIAVTCLVIACTGSGSVLSGF. Residues 406–416 are Cytoplasmic-facing; the sequence is NVNHFDIAPRY. The chain crosses the membrane as a helical span at residues 417–437; the sequence is APILMGIANGLGAVAGVGGMV. The Extracellular portion of the chain corresponds to 438 to 450; that stretch reads TNTVTYQNPDGWK. The helical transmembrane segment at 451–471 threads the bilayer; that stretch reads WVFLLAMAIDIFGVIFFLIFA. Topologically, residues 472–544 are cytoplasmic; sequence KGDVLPWARE…APAEKSESSS (73 aa). Positions 501–544 are disordered; that stretch reads SLSRKTRNREGDTSYEKMEEDSEMKPCSKKVEARAPAEKSESSS. Basic and acidic residues predominate over residues 508 to 544; sequence NREGDTSYEKMEEDSEMKPCSKKVEARAPAEKSESSS.

Belongs to the major facilitator superfamily. Sodium/anion cotransporter family. VGLUT subfamily.

Its subcellular location is the membrane. This is Potential vesicular glutamate transporter vglu-3 (vglu-3) from Caenorhabditis elegans.